The following is an 800-amino-acid chain: Protein PET111, mitochondrial (800 aa).

It to yeast YHR160C.

The protein resides in the mitochondrion matrix. In terms of biological role, required for translation of the mitochondrial gene for cytochrome c oxidase subunit II (COX2). The sequence is that of Protein PET111, mitochondrial (PET111) from Saccharomyces cerevisiae (strain ATCC 204508 / S288c) (Baker's yeast).